The chain runs to 493 residues: ATP synthase subunit beta, chloroplastic (493 aa).

170 to 177 (GGAGVGKT) lines the ATP pocket.

The protein belongs to the ATPase alpha/beta chains family. F-type ATPases have 2 components, CF(1) - the catalytic core - and CF(0) - the membrane proton channel. CF(1) has five subunits: alpha(3), beta(3), gamma(1), delta(1), epsilon(1). CF(0) has four main subunits: a(1), b(1), b'(1) and c(9-12).

It localises to the plastid. Its subcellular location is the chloroplast thylakoid membrane. The enzyme catalyses ATP + H2O + 4 H(+)(in) = ADP + phosphate + 5 H(+)(out). In terms of biological role, produces ATP from ADP in the presence of a proton gradient across the membrane. The catalytic sites are hosted primarily by the beta subunits. The protein is ATP synthase subunit beta, chloroplastic of Adiantum capillus-veneris (Maidenhair fern).